A 714-amino-acid polypeptide reads, in one-letter code: Phosphoribosylformylglycinamidine synthase subunit PurL (714 aa).

His34 is an active-site residue. An ATP-binding site is contributed by Tyr37. A Mg(2+)-binding site is contributed by Glu78. Substrate contacts are provided by residues 79–82 (SHNH) and Arg101. His80 serves as the catalytic Proton acceptor. Position 102 (Asp102) interacts with Mg(2+). Gln226 contributes to the substrate binding site. Position 254 (Asp254) interacts with Mg(2+). 298–300 (ESQ) is a binding site for substrate. 2 residues coordinate ATP: Asp474 and Gly511. Asn512 provides a ligand contact to Mg(2+). A substrate-binding site is contributed by Ser514.

It belongs to the FGAMS family. Monomer. Part of the FGAM synthase complex composed of 1 PurL, 1 PurQ and 2 PurS subunits.

The protein resides in the cytoplasm. It catalyses the reaction N(2)-formyl-N(1)-(5-phospho-beta-D-ribosyl)glycinamide + L-glutamine + ATP + H2O = 2-formamido-N(1)-(5-O-phospho-beta-D-ribosyl)acetamidine + L-glutamate + ADP + phosphate + H(+). Its pathway is purine metabolism; IMP biosynthesis via de novo pathway; 5-amino-1-(5-phospho-D-ribosyl)imidazole from N(2)-formyl-N(1)-(5-phospho-D-ribosyl)glycinamide: step 1/2. Functionally, part of the phosphoribosylformylglycinamidine synthase complex involved in the purines biosynthetic pathway. Catalyzes the ATP-dependent conversion of formylglycinamide ribonucleotide (FGAR) and glutamine to yield formylglycinamidine ribonucleotide (FGAM) and glutamate. The FGAM synthase complex is composed of three subunits. PurQ produces an ammonia molecule by converting glutamine to glutamate. PurL transfers the ammonia molecule to FGAR to form FGAM in an ATP-dependent manner. PurS interacts with PurQ and PurL and is thought to assist in the transfer of the ammonia molecule from PurQ to PurL. This chain is Phosphoribosylformylglycinamidine synthase subunit PurL, found in Methanothermobacter marburgensis (strain ATCC BAA-927 / DSM 2133 / JCM 14651 / NBRC 100331 / OCM 82 / Marburg) (Methanobacterium thermoautotrophicum).